Here is a 561-residue protein sequence, read N- to C-terminus: Dihydroxy-acid dehydratase (561 aa).

Residue C50 coordinates [2Fe-2S] cluster. Residue D82 coordinates Mg(2+). C123 is a binding site for [2Fe-2S] cluster. Residues D124 and K125 each contribute to the Mg(2+) site. K125 bears the N6-carboxylysine mark. Residue C195 coordinates [2Fe-2S] cluster. E447 is a binding site for Mg(2+). S473 acts as the Proton acceptor in catalysis.

The protein belongs to the IlvD/Edd family. Homodimer. [2Fe-2S] cluster serves as cofactor. Mg(2+) is required as a cofactor.

It catalyses the reaction (2R)-2,3-dihydroxy-3-methylbutanoate = 3-methyl-2-oxobutanoate + H2O. It carries out the reaction (2R,3R)-2,3-dihydroxy-3-methylpentanoate = (S)-3-methyl-2-oxopentanoate + H2O. The protein operates within amino-acid biosynthesis; L-isoleucine biosynthesis; L-isoleucine from 2-oxobutanoate: step 3/4. Its pathway is amino-acid biosynthesis; L-valine biosynthesis; L-valine from pyruvate: step 3/4. Functions in the biosynthesis of branched-chain amino acids. Catalyzes the dehydration of (2R,3R)-2,3-dihydroxy-3-methylpentanoate (2,3-dihydroxy-3-methylvalerate) into 2-oxo-3-methylpentanoate (2-oxo-3-methylvalerate) and of (2R)-2,3-dihydroxy-3-methylbutanoate (2,3-dihydroxyisovalerate) into 2-oxo-3-methylbutanoate (2-oxoisovalerate), the penultimate precursor to L-isoleucine and L-valine, respectively. The sequence is that of Dihydroxy-acid dehydratase from Acaryochloris marina (strain MBIC 11017).